The primary structure comprises 449 residues: Probable hexaprenyl pyrophosphate synthase, mitochondrial (449 aa).

The isopentenyl diphosphate site is built by Lys122, Arg125, and His200. The Mg(2+) site is built by Asp207 and Asp211. Arg216 lines the an all-trans-polyprenyl diphosphate pocket. Position 217 (Arg217) interacts with isopentenyl diphosphate. An all-trans-polyprenyl diphosphate is bound by residues Lys300, Thr301, Gln338, and Lys355.

This sequence belongs to the FPP/GGPP synthase family. The cofactor is Mg(2+).

Its subcellular location is the mitochondrion. Its pathway is cofactor biosynthesis; ubiquinone biosynthesis. Assembly of polyisoprenoid side chains. The polyprenyl synthase of coenzyme Q biosynthesis catalyzes the formation from isopentenyl diphosphate of all trans-polyprenyl pyrophosphates generally ranging in length of between 6 and 10 isoprene units depending on the species. The protein is Probable hexaprenyl pyrophosphate synthase, mitochondrial of Neurospora crassa (strain ATCC 24698 / 74-OR23-1A / CBS 708.71 / DSM 1257 / FGSC 987).